The sequence spans 103 residues: Large ribosomal subunit protein bL21 (103 aa).

It belongs to the bacterial ribosomal protein bL21 family. As to quaternary structure, part of the 50S ribosomal subunit. Contacts protein L20.

Its function is as follows. This protein binds to 23S rRNA in the presence of protein L20. This Lactobacillus acidophilus (strain ATCC 700396 / NCK56 / N2 / NCFM) protein is Large ribosomal subunit protein bL21.